A 350-amino-acid polypeptide reads, in one-letter code: Putative F-box protein At1g23770 (350 aa).

The span at 1–15 (MDTGFADSNNDSSPG) shows a compositional bias: polar residues. The tract at residues 1 to 29 (MDTGFADSNNDSSPGEGSKRGNSGIEGPV) is disordered. Positions 206 to 252 (PPCLMLLPTELKLKILELLPGVSIGYMACVCTEMRYLASDNDLWEHK) constitute an F-box domain.

The protein is Putative F-box protein At1g23770 of Arabidopsis thaliana (Mouse-ear cress).